A 153-amino-acid polypeptide reads, in one-letter code: Calmodulin-like protein 4 (153 aa).

EF-hand domains are found at residues 8–43 (DQIN…LGAS), 44–79 (PTPG…QIKQ), 81–116 (DPKK…LGEK), and 117–152 (LTHK…PVRD).

Belongs to the calmodulin family. As to quaternary structure, interacts with MYO7B; the interaction mediates the association of CALML4 with the IMAC/intermicrovillar adhesion complex. Interacts with MYO7A.

The protein resides in the cell projection. It localises to the microvillus. Functionally, as part of the intermicrovillar adhesion complex/IMAC plays a role in epithelial brush border differentiation, controlling microvilli organization and length. Acts as a light chain for MYO7B and is required for efficient targeting of the IMAC to the tips of border brush microvilli. The sequence is that of Calmodulin-like protein 4 (CALML4) from Bos taurus (Bovine).